The primary structure comprises 311 residues: Malate dehydrogenase (311 aa).

Residues 7–13 and Asp34 contribute to the NAD(+) site; that span reads GAAGGIG. Residues Arg81 and Arg87 each contribute to the substrate site. NAD(+)-binding positions include Asn94 and 117-119; that span reads ITN. 2 residues coordinate substrate: Asn119 and Arg153. The Proton acceptor role is filled by His177. NAD(+) is bound at residue Met227.

The protein belongs to the LDH/MDH superfamily. MDH type 1 family. In terms of assembly, homodimer.

The catalysed reaction is (S)-malate + NAD(+) = oxaloacetate + NADH + H(+). Functionally, catalyzes the reversible oxidation of malate to oxaloacetate. This chain is Malate dehydrogenase, found in Shewanella halifaxensis (strain HAW-EB4).